A 198-amino-acid chain; its full sequence is Putative protein-methionine-sulfoxide reductase subunit YedZ1 (198 aa).

A run of 4 helical transmembrane segments spans residues 12–32, 63–83, 124–144, and 167–187; these read WLRVTHWLYVVAVVILVMSGW, FAAMWLLAVNGLIYLFFNIFS, AAYLFAIADIIVIVLSGLVLW, and FIGMSALVAFVGVHVAMVALV.

It belongs to the HupC/HyaC/HydC family.

It is found in the cell inner membrane. In terms of biological role, part of the YedY1-YedZ1 system that may repair oxidized proteins containing methionine sulfoxide residues (Met-O). This chain is Putative protein-methionine-sulfoxide reductase subunit YedZ1, found in Azospira oryzae (strain ATCC BAA-33 / DSM 13638 / PS) (Dechlorosoma suillum).